Here is a 254-residue protein sequence, read N- to C-terminus: 5-oxoprolinase subunit A (254 aa).

The protein belongs to the LamB/PxpA family. In terms of assembly, forms a complex composed of PxpA, PxpB and PxpC.

It catalyses the reaction 5-oxo-L-proline + ATP + 2 H2O = L-glutamate + ADP + phosphate + H(+). Its function is as follows. Catalyzes the cleavage of 5-oxoproline to form L-glutamate coupled to the hydrolysis of ATP to ADP and inorganic phosphate. The polypeptide is 5-oxoprolinase subunit A (Acinetobacter baumannii (strain ATCC 17978 / DSM 105126 / CIP 53.77 / LMG 1025 / NCDC KC755 / 5377)).